The following is a 259-amino-acid chain: Global transcriptional regulator CodY (259 aa).

The GAF domain stretch occupies residues 1 to 155; it reads MDLLTRTRKI…GATVVGMEIL (155 aa). Positions 203–222 form a DNA-binding region, H-T-H motif; it reads ASKIADRVGITRSVIVNALR. Ser215 bears the Phosphoserine mark.

The protein belongs to the CodY family.

The protein resides in the cytoplasm. DNA-binding global transcriptional regulator which is involved in the adaptive response to starvation and acts by directly or indirectly controlling the expression of numerous genes in response to nutrient availability. During rapid exponential growth, CodY is highly active and represses genes whose products allow adaptation to nutrient depletion. This Shouchella clausii (strain KSM-K16) (Alkalihalobacillus clausii) protein is Global transcriptional regulator CodY.